The chain runs to 118 residues: Holo-[acyl-carrier-protein] synthase (118 aa).

Mg(2+) is bound by residues D8 and E57.

This sequence belongs to the P-Pant transferase superfamily. AcpS family. Mg(2+) serves as cofactor.

It localises to the cytoplasm. The enzyme catalyses apo-[ACP] + CoA = holo-[ACP] + adenosine 3',5'-bisphosphate + H(+). Its function is as follows. Transfers the 4'-phosphopantetheine moiety from coenzyme A to a Ser of acyl-carrier-protein. The polypeptide is Holo-[acyl-carrier-protein] synthase (Acholeplasma laidlawii (strain PG-8A)).